Here is a 559-residue protein sequence, read N- to C-terminus: Sporulation protein kinase mde3 (559 aa).

A Protein kinase domain is found at 21 to 323 (YLVKQKLGDG…TAKYCKEVFF (303 aa)). ATP contacts are provided by residues 27–35 (LGDGSFGTV) and Lys53. Asp150 serves as the catalytic Proton acceptor.

The protein belongs to the protein kinase superfamily. Ser/Thr protein kinase family.

It catalyses the reaction L-seryl-[protein] + ATP = O-phospho-L-seryl-[protein] + ADP + H(+). The enzyme catalyses L-threonyl-[protein] + ATP = O-phospho-L-threonyl-[protein] + ADP + H(+). Functionally, protein kinase which is essential for spore formation. This Schizosaccharomyces pombe (strain 972 / ATCC 24843) (Fission yeast) protein is Sporulation protein kinase mde3 (mde3).